The primary structure comprises 529 residues: Ribonuclease Y (529 aa).

A helical membrane pass occupies residues 4 to 24 (GLIYISLEVIVACLISALAMY). The KH domain maps to 216 to 297 (FTNRIALPCS…NRIEEVYHRV (82 aa)). The region spanning 342-435 (ALQHSKEVAL…VCAADALSAG (94 aa)) is the HD domain.

The protein belongs to the RNase Y family.

It localises to the cell membrane. Functionally, endoribonuclease that initiates mRNA decay. The chain is Ribonuclease Y from Helicobacter acinonychis (strain Sheeba).